The primary structure comprises 286 residues: Beta-lactamase SHV-5 (286 aa).

Residues 1-21 form the signal peptide; it reads MRYIRLCIISLLATLPLAVHA. Residue serine 66 is the Acyl-ester intermediate of the active site. Residues cysteine 73 and cysteine 119 are joined by a disulfide bond. Glutamate 164 functions as the Proton acceptor in the catalytic mechanism. Position 230–232 (230–232) interacts with substrate; that stretch reads KTG.

It belongs to the class-A beta-lactamase family.

It carries out the reaction a beta-lactam + H2O = a substituted beta-amino acid. Its function is as follows. SHV enzymes hydrolyze broad spectrum cephalosporins notably cefotaxime and ceftazidime. SHV-5 causes particularly high levels of resistance to aztreonam and ceftazidime. The chain is Beta-lactamase SHV-5 (bla) from Klebsiella pneumoniae.